The chain runs to 358 residues: Membrane-bound lytic murein transglycosylase C (358 aa).

The signal sequence occupies residues methionine 1 to serine 16. A lipid anchor (N-palmitoyl cysteine) is attached at cysteine 17. Cysteine 17 carries the S-diacylglycerol cysteine lipid modification.

This sequence belongs to the transglycosylase Slt family.

It localises to the cell outer membrane. The enzyme catalyses Exolytic cleavage of the (1-&gt;4)-beta-glycosidic linkage between N-acetylmuramic acid (MurNAc) and N-acetylglucosamine (GlcNAc) residues in peptidoglycan, from either the reducing or the non-reducing ends of the peptidoglycan chains, with concomitant formation of a 1,6-anhydrobond in the MurNAc residue.. Functionally, murein-degrading enzyme. May play a role in recycling of muropeptides during cell elongation and/or cell division. This is Membrane-bound lytic murein transglycosylase C from Yersinia pseudotuberculosis serotype O:1b (strain IP 31758).